A 280-amino-acid polypeptide reads, in one-letter code: Acetyl-coenzyme A carboxylase carboxyl transferase subunit beta (280 aa).

One can recognise a CoA carboxyltransferase N-terminal domain in the interval 25–280 (VMRECPICHA…RLHTKENAYG (256 aa)). Positions 29, 32, 47, and 50 each coordinate Zn(2+). The C4-type zinc finger occupies 29–50 (CPICHAKFLSMRLGRDHTCPKC).

This sequence belongs to the AccD/PCCB family. In terms of assembly, acetyl-CoA carboxylase is a heterohexamer composed of biotin carboxyl carrier protein (AccB), biotin carboxylase (AccC) and two subunits each of ACCase subunit alpha (AccA) and ACCase subunit beta (AccD). It depends on Zn(2+) as a cofactor.

It localises to the cytoplasm. It catalyses the reaction N(6)-carboxybiotinyl-L-lysyl-[protein] + acetyl-CoA = N(6)-biotinyl-L-lysyl-[protein] + malonyl-CoA. It participates in lipid metabolism; malonyl-CoA biosynthesis; malonyl-CoA from acetyl-CoA: step 1/1. Its function is as follows. Component of the acetyl coenzyme A carboxylase (ACC) complex. Biotin carboxylase (BC) catalyzes the carboxylation of biotin on its carrier protein (BCCP) and then the CO(2) group is transferred by the transcarboxylase to acetyl-CoA to form malonyl-CoA. This is Acetyl-coenzyme A carboxylase carboxyl transferase subunit beta from Lactobacillus helveticus (strain DPC 4571).